Consider the following 389-residue polypeptide: Large envelope protein (389 aa).

M1 bears the N-acetylmethionine mark. Residue G2 is the site of N-myristoyl glycine; by host attachment. Positions 2-108 are pre-S1; sequence GQNLSTSNPL…PPLRNTHPQA (107 aa). The pre-S stretch occupies residues 2–163; the sequence is GQNLSTSNPL…FSRIGDPALN (162 aa). The Virion surface; in external conformation segment spans residues 2–170; sequence GQNLSTSNPL…ALNMENITSG (169 aa). The Intravirion; in internal conformation segment spans residues 2-242; sequence GQNLSTSNPL…PGYRWMCLRR (241 aa). Positions 77–101 are disordered; it reads LPANPPPASTNRQTGRQPTPLSPPL. Polar residues predominate over residues 85-95; that stretch reads STNRQTGRQPT. A pre-S2 region spans residues 109–163; that stretch reads MQWNSTTFHQTLQDPRVRGLYFPAGGSSSGTVNPVPTTASPISSIFSRIGDPALN. A helical membrane pass occupies residues 171 to 191; it reads LLGPLLVLQAGFFLLTRILTI. Over 192 to 242 the chain is Intravirion; in external conformation; sequence PQSLDSWWTSLNFLGGTTVCLGQNSQSPTSNHSPTSCPPTCPGYRWMCLRR. The chain crosses the membrane as a helical span at residues 243-263; the sequence is FIIFLFILLLCLIFLLVLLDY. Topologically, residues 264–337 are virion surface; that stretch reads QGMLPVCPLI…WASARFSWLS (74 aa). N309 carries N-linked (GlcNAc...) asparagine; by host glycosylation. Residues 338–358 traverse the membrane as a helical segment; the sequence is LLVPFVQWFVGLSPTVWLSVI. At 359–364 the chain is on the intravirion side; sequence WMMWYW. Residues 365-387 traverse the membrane as a helical segment; the sequence is GPSLYRILSPFLPLLPIFFCLWV. Residues 388–389 lie on the Virion surface side of the membrane; that stretch reads YI.

The protein belongs to the orthohepadnavirus major surface antigen family. In terms of assembly, in its internal form (Li-HBsAg), interacts with the capsid protein and with the isoform S. Interacts with host chaperone CANX. As to quaternary structure, associates with host chaperone CANX through its pre-S2 N glycan; this association may be essential for isoform M proper secretion. Interacts with isoform L. Interacts with the antigens of satellite virus HDV (HDVAgs); this interaction is required for encapsidation of HDV genomic RNA. Isoform M is N-terminally acetylated by host at a ratio of 90%, and N-glycosylated by host at the pre-S2 region. In terms of processing, myristoylated.

The protein localises to the virion membrane. In terms of biological role, the large envelope protein exists in two topological conformations, one which is termed 'external' or Le-HBsAg and the other 'internal' or Li-HBsAg. In its external conformation the protein attaches the virus to cell receptors and thereby initiating infection. This interaction determines the species specificity and liver tropism. This attachment induces virion internalization predominantly through caveolin-mediated endocytosis. The large envelope protein also assures fusion between virion membrane and endosomal membrane. In its internal conformation the protein plays a role in virion morphogenesis and mediates the contact with the nucleocapsid like a matrix protein. Functionally, the middle envelope protein plays an important role in the budding of the virion. It is involved in the induction of budding in a nucleocapsid independent way. In this process the majority of envelope proteins bud to form subviral lipoprotein particles of 22 nm of diameter that do not contain a nucleocapsid. The sequence is that of Large envelope protein from Hepatitis B virus genotype D (isolate Germany/1-91/1991) (HBV-D).